A 147-amino-acid chain; its full sequence is Hemoglobin larval subunit beta-1 (147 aa).

A Globin domain is found at 3 to 147; the sequence is HLSADEKSAI…LVAALSHGYF (145 aa). Residues His64 and His93 each contribute to the heme b site.

It belongs to the globin family. In terms of assembly, heterotetramer of two alpha chains and two beta chains. As to expression, red blood cells.

This is a larval (tadpole) beta-globin. The protein is Hemoglobin larval subunit beta-1 of Xenopus laevis (African clawed frog).